The chain runs to 68 residues: Large ribosomal subunit protein uL29 (68 aa).

It belongs to the universal ribosomal protein uL29 family.

The chain is Large ribosomal subunit protein uL29 from Persephonella marina (strain DSM 14350 / EX-H1).